A 92-amino-acid polypeptide reads, in one-letter code: MALIQTNKDLISKGIKEFNILLNQQVFSDPAISEEAMVTVVNDWVSFYINYYKKQLSGEQDEQDKALQEFRQELNTLSASFLDKYRNFLKSS.

This sequence belongs to the AHSP family. In terms of assembly, monomer. Forms a heterodimer with free alpha-hemoglobin. Does not bind beta-hemoglobin nor alpha(2)beta(2) hemoglobin A.

The protein localises to the cytoplasm. Acts as a chaperone to prevent the harmful aggregation of alpha-hemoglobin during normal erythroid cell development. Specifically protects free alpha-hemoglobin from precipitation. The sequence is that of Alpha-hemoglobin-stabilizing protein (AHSP) from Bos taurus (Bovine).